A 235-amino-acid polypeptide reads, in one-letter code: Isoprenyl transferase (235 aa).

The active site involves Asp21. Asp21 contributes to the Mg(2+) binding site. Substrate-binding positions include 22-25, Trp26, Lys34, His38, and 66-68; these read GNAR and SSE. The Proton acceptor role is filled by Asn69. Substrate is bound by residues Trp70, Arg72, Arg183, and 189-191; that span reads RIS. A Mg(2+)-binding site is contributed by Glu202.

Belongs to the UPP synthase family. Homodimer. Mg(2+) is required as a cofactor.

In terms of biological role, catalyzes the condensation of isopentenyl diphosphate (IPP) with allylic pyrophosphates generating different type of terpenoids. In Rickettsia conorii (strain ATCC VR-613 / Malish 7), this protein is Isoprenyl transferase.